The sequence spans 199 residues: Dephospho-CoA kinase (199 aa).

Residues 3–199 form the DPCK domain; sequence ILGLTGSIGM…EVVKMPQRRA (197 aa). 11–16 contacts ATP; that stretch reads GMGKST.

This sequence belongs to the CoaE family.

Its subcellular location is the cytoplasm. The catalysed reaction is 3'-dephospho-CoA + ATP = ADP + CoA + H(+). It participates in cofactor biosynthesis; coenzyme A biosynthesis; CoA from (R)-pantothenate: step 5/5. Functionally, catalyzes the phosphorylation of the 3'-hydroxyl group of dephosphocoenzyme A to form coenzyme A. This Bradyrhizobium diazoefficiens (strain JCM 10833 / BCRC 13528 / IAM 13628 / NBRC 14792 / USDA 110) protein is Dephospho-CoA kinase.